The sequence spans 208 residues: ATP phosphoribosyltransferase (208 aa).

The protein belongs to the ATP phosphoribosyltransferase family. Short subfamily. Heteromultimer composed of HisG and HisZ subunits.

Its subcellular location is the cytoplasm. It catalyses the reaction 1-(5-phospho-beta-D-ribosyl)-ATP + diphosphate = 5-phospho-alpha-D-ribose 1-diphosphate + ATP. The protein operates within amino-acid biosynthesis; L-histidine biosynthesis; L-histidine from 5-phospho-alpha-D-ribose 1-diphosphate: step 1/9. Catalyzes the condensation of ATP and 5-phosphoribose 1-diphosphate to form N'-(5'-phosphoribosyl)-ATP (PR-ATP). Has a crucial role in the pathway because the rate of histidine biosynthesis seems to be controlled primarily by regulation of HisG enzymatic activity. This chain is ATP phosphoribosyltransferase, found in Lactococcus lactis subsp. cremoris (strain MG1363).